The sequence spans 163 residues: uncharacterized protein (163 aa).

It belongs to the LcrH/SycD chaperone family.

This is an uncharacterized protein from Escherichia coli (strain K12).